The following is a 294-amino-acid chain: Potassium-transporting ATPase subunit beta (294 aa).

Residues 1-36 (MAALQEKKSCSQRMAEFRQYCWNPDTGQMLGRTPAR) lie on the Cytoplasmic side of the membrane. Residues 37–57 (WVWISLYYAAFYVVMTGLFAL) form a helical; Signal-anchor for type II membrane protein membrane-spanning segment. Topologically, residues 58-294 (CIYVLMQTID…KVEFKLTIQK (237 aa)) are extracellular. N-linked (GlcNAc...) asparagine glycosylation is found at N99, N103, N130, N146, and N161. A disulfide bridge connects residues C131 and C152. An intrachain disulfide couples C162 to C178. N-linked (GlcNAc...) asparagine glycans are attached at residues N193 and N225. Residues 194 to 294 (NTAPRVDCTF…KVEFKLTIQK (101 aa)) are immunoglobulin-like. A disulfide bridge connects residues C201 and C266.

The protein belongs to the X(+)/potassium ATPases subunit beta family. As to quaternary structure, the ATPase pump is composed of two subunits: alpha (catalytic) and beta (regulatory). Interacts with alpha subunit ATP12A; this interaction is required for the formation of a functionally active pump and targeting at the plasma membrane. Interacts (via N-terminus) with alpha subunit ATP4A (via the P-domain). N-glycosylation is necessary for assembly and functional expression of the pump at the plasma membrane. As to expression, stomach.

The protein resides in the apical cell membrane. The protein localises to the cell membrane. In terms of biological role, the beta subunit of the gastric H(+)/K(+) ATPase pump which transports H(+) ions in exchange for K(+) ions across the apical membrane of parietal cells. Plays a structural and regulatory role in the assembly and membrane targeting of a functionally active pump. Within a transport cycle, the transfer of a H(+) ion across the membrane is coupled to ATP hydrolysis and is associated with a transient phosphorylation of the alpha subunit that shifts the pump conformation from inward-facing (E1) to outward-facing state (E2). Interacts with the phosphorylation domain of the alpha subunit and functions as a ratchet, stabilizing the lumenal-open E2 conformation and preventing the reverse reaction of the transport cycle. The chain is Potassium-transporting ATPase subunit beta (Atp4b) from Rattus norvegicus (Rat).